Reading from the N-terminus, the 323-residue chain is tRNA dimethylallyltransferase (323 aa).

Residue 18 to 25 (GPTASGKS) participates in ATP binding. 20 to 25 (TASGKS) contributes to the substrate binding site. Interaction with substrate tRNA regions lie at residues 43–46 (DSAQ), 167–171 (QRIQR), and 249–254 (RCVGYR).

It belongs to the IPP transferase family. Monomer. The cofactor is Mg(2+).

The enzyme catalyses adenosine(37) in tRNA + dimethylallyl diphosphate = N(6)-dimethylallyladenosine(37) in tRNA + diphosphate. Catalyzes the transfer of a dimethylallyl group onto the adenine at position 37 in tRNAs that read codons beginning with uridine, leading to the formation of N6-(dimethylallyl)adenosine (i(6)A). The chain is tRNA dimethylallyltransferase from Nitrosospira multiformis (strain ATCC 25196 / NCIMB 11849 / C 71).